The chain runs to 576 residues: Arginine--tRNA ligase (576 aa).

The 'HIGH' region signature appears at 126–136 (ANPTGPMHIGH).

This sequence belongs to the class-I aminoacyl-tRNA synthetase family. In terms of assembly, monomer.

It localises to the cytoplasm. It catalyses the reaction tRNA(Arg) + L-arginine + ATP = L-arginyl-tRNA(Arg) + AMP + diphosphate. This Rickettsia rickettsii (strain Iowa) protein is Arginine--tRNA ligase.